Consider the following 176-residue polypeptide: Lipoprotein signal peptidase (176 aa).

3 helical membrane-spanning segments follow: residues 12-32 (WYWM…WVLA), 67-87 (WQRW…TIWL), and 94-116 (MWRL…IDRL). Active-site residues include aspartate 123 and aspartate 141. Residues 137 to 157 (FNIADSAICVGAALIIIDSII) form a helical membrane-spanning segment.

This sequence belongs to the peptidase A8 family.

It is found in the cell inner membrane. The catalysed reaction is Release of signal peptides from bacterial membrane prolipoproteins. Hydrolyzes -Xaa-Yaa-Zaa-|-(S,diacylglyceryl)Cys-, in which Xaa is hydrophobic (preferably Leu), and Yaa (Ala or Ser) and Zaa (Gly or Ala) have small, neutral side chains.. It functions in the pathway protein modification; lipoprotein biosynthesis (signal peptide cleavage). In terms of biological role, this protein specifically catalyzes the removal of signal peptides from prolipoproteins. In Shewanella woodyi (strain ATCC 51908 / MS32), this protein is Lipoprotein signal peptidase.